The sequence spans 146 residues: Spermidine export protein MdtJ (146 aa).

A run of 4 helical transmembrane segments spans residues 1 to 21, 31 to 51, 54 to 74, and 76 to 96; these read MIYW…TLSM, TGMI…AIAV, VALG…ITTF, and VLWF…MLIA.

Belongs to the drug/metabolite transporter (DMT) superfamily. Small multidrug resistance (SMR) (TC 2.A.7.1) family. MdtJ subfamily. Forms a complex with MdtI.

The protein resides in the cell inner membrane. Its function is as follows. Catalyzes the excretion of spermidine. This is Spermidine export protein MdtJ from Proteus mirabilis (strain HI4320).